We begin with the raw amino-acid sequence, 365 residues long: Coxsackievirus and adenovirus receptor homolog (365 aa).

The N-terminal stretch at 1–19 (MELLLRFLLLCGVADFTRG) is a signal peptide. Ig-like C2-type domains lie at 20 to 136 (LSIT…IQLT) and 141 to 228 (PSGI…LRLD). The Extracellular segment spans residues 20–238 (LSITTPEQMI…VVPPSNRAGT (219 aa)). Intrachain disulfides connect Cys-41–Cys-120, Cys-146–Cys-223, and Cys-162–Cys-212. The N-linked (GlcNAc...) asparagine glycan is linked to Asn-106. Residues 239-259 (IAGAVIGTLLALVLIALIVFC) traverse the membrane as a helical segment. 2 S-palmitoyl cysteine lipidation sites follow: Cys-259 and Cys-260. Residues 260–365 (CHKKRREEKY…PAQSKDGSIV (106 aa)) lie on the Cytoplasmic side of the membrane. Residues 269–282 (YEKEVHHDIREDVP) are compositionally biased toward basic and acidic residues. Residues 269–343 (YEKEVHHDIR…TLPPAKVAAP (75 aa)) form a disordered region. Residues 286-322 (SRTSTARSYIGSNHSSLGSMSPSNMEGYSKTQYNQVP) are compositionally biased toward polar residues. Phosphoserine occurs at positions 297, 304, 306, 323, 332, and 363. The PDZ-binding signature appears at 360–365 (KDGSIV).

In terms of assembly, monomer. May form homodimers. Interacts with LNX, MAGI1, DLG4, PRKCABP, TJP1 and CTNNB1. Interacts with MPDZ; recruits MPDZ to intercellular contact sites. Interacts with JAML (homodimeric form). Post-translationally, N-glycosylated. In terms of processing, palmitoylated on Cys-259 and/or Cys-260; required for proper localization to the plasma membrane.

Its subcellular location is the cell membrane. The protein localises to the basolateral cell membrane. The protein resides in the cell junction. It localises to the tight junction. It is found in the adherens junction. In terms of biological role, component of the epithelial apical junction complex that may function as a homophilic cell adhesion molecule and is essential for tight junction integrity. Also involved in transepithelial migration of leukocytes through adhesive interactions with JAML a transmembrane protein of the plasma membrane of leukocytes. The interaction between both receptors also mediates the activation of gamma-delta T-cells, a subpopulation of T-cells residing in epithelia and involved in tissue homeostasis and repair. Upon epithelial CXADR-binding, JAML induces downstream cell signaling events in gamma-delta T-cells through PI3-kinase and MAP kinases. It results in proliferation and production of cytokines and growth factors by T-cells that in turn stimulate epithelial tissues repair. This Bos taurus (Bovine) protein is Coxsackievirus and adenovirus receptor homolog (CXADR).